A 523-amino-acid chain; its full sequence is Ribonuclease Y (523 aa).

The chain crosses the membrane as a helical span at residues 28–48 (TYYIVATIIIAVIAVYVDYYI). The KH domain occupies 227–312 (TVYVVNLPND…EMVEKAKKEV (86 aa)). The HD domain maps to 353–446 (VLKHSIEVSY…VQAADAISAA (94 aa)).

It belongs to the RNase Y family.

The protein localises to the cell membrane. Endoribonuclease that initiates mRNA decay. The polypeptide is Ribonuclease Y (Clostridium tetani (strain Massachusetts / E88)).